We begin with the raw amino-acid sequence, 192 residues long: MAREREGRRRDEREERDTEFVDRLVHINRVAKVVKGGRRFGFAALVVVGDQKGRVGFGHGKAREVPEAIRKATEAAKRGLIRVALREGRTLHHDVAGRHGSGKVILRAAPQGTGIIAGGPMRAVFESVGMQDVVAKSLGSSNPYNLIRATFDALKREDSPRAVAARRGLKVSALQARRRDAEPGSADSADAA.

In terms of domain architecture, S5 DRBM spans 20-83; it reads FVDRLVHINR…EAAKRGLIRV (64 aa). Residues 165–192 are disordered; that stretch reads ARRGLKVSALQARRRDAEPGSADSADAA.

Belongs to the universal ribosomal protein uS5 family. Part of the 30S ribosomal subunit. Contacts proteins S4 and S8.

Its function is as follows. With S4 and S12 plays an important role in translational accuracy. Functionally, located at the back of the 30S subunit body where it stabilizes the conformation of the head with respect to the body. This chain is Small ribosomal subunit protein uS5, found in Methylobacterium sp. (strain 4-46).